Here is a 203-residue protein sequence, read N- to C-terminus: Glycerol-3-phosphate acyltransferase 1 (203 aa).

Transmembrane regions (helical) follow at residues 2 to 22 (LNFFLITIQFLSGAVMYSHII), 52 to 72 (GFPALMLDYFKGTFPIAFFVW), 82 to 102 (VIAFAALSGILGHAFSPFLKF), 117 to 137 (VLTKWEGPMVLGTVFTIFSIL), 150 to 168 (EDAFRVMIGFAALLIYTMW), and 170 to 190 (VFNGMPELAILYFGNFLIVFY).

This sequence belongs to the PlsY family. Probably interacts with PlsX.

The protein resides in the cell inner membrane. The enzyme catalyses an acyl phosphate + sn-glycerol 3-phosphate = a 1-acyl-sn-glycero-3-phosphate + phosphate. It functions in the pathway lipid metabolism; phospholipid metabolism. Catalyzes the transfer of an acyl group from acyl-phosphate (acyl-PO(4)) to glycerol-3-phosphate (G3P) to form lysophosphatidic acid (LPA). This enzyme utilizes acyl-phosphate as fatty acyl donor, but not acyl-CoA or acyl-ACP. This chain is Glycerol-3-phosphate acyltransferase 1, found in Thermotoga maritima (strain ATCC 43589 / DSM 3109 / JCM 10099 / NBRC 100826 / MSB8).